Consider the following 277-residue polypeptide: Bifunctional protein FolD (277 aa).

NADP(+) is bound by residues 160–162 (GAS), Ser185, and Ile226.

Belongs to the tetrahydrofolate dehydrogenase/cyclohydrolase family. Homodimer.

It carries out the reaction (6R)-5,10-methylene-5,6,7,8-tetrahydrofolate + NADP(+) = (6R)-5,10-methenyltetrahydrofolate + NADPH. The enzyme catalyses (6R)-5,10-methenyltetrahydrofolate + H2O = (6R)-10-formyltetrahydrofolate + H(+). The protein operates within one-carbon metabolism; tetrahydrofolate interconversion. Catalyzes the oxidation of 5,10-methylenetetrahydrofolate to 5,10-methenyltetrahydrofolate and then the hydrolysis of 5,10-methenyltetrahydrofolate to 10-formyltetrahydrofolate. The polypeptide is Bifunctional protein FolD (Ruthia magnifica subsp. Calyptogena magnifica).